Here is a 146-residue protein sequence, read N- to C-terminus: Decarboxylase dmxR15 (146 aa).

The 96-residue stretch at 31-126 (PGMSEGDYRN…MHDHEVFADT (96 aa)) folds into the EthD domain.

The protein belongs to the tpcK family.

The enzyme catalyses atrochrysone carboxylate + H(+) = atrochrysone + CO2. It participates in secondary metabolite biosynthesis. In terms of biological role, decarboxylase; part of the gene cluster that mediates the biosynthesis of the dimeric xanthones cryptosporioptides. The pathway begins with the synthesis of atrochrysone thioester by the polyketide synthase dmx-nrPKS. The atrochrysone carboxyl ACP thioesterase dmxR1 then breaks the thioester bond and releases the atrochrysone carboxylic acid from dmx-nrPKS. Atrochrysone carboxylic acid is decarboxylated by the decarboxylase dmxR15, and oxidized by the anthrone oxygenase dmxR16 to yield emodin. Emodin is then reduced to emodin hydroquinone by the oxidoreductase dmxR7. A-ring reduction by the short chain dehydrogenase dmxR18, dehydration by the scytalone dehydratase-like protein dmxR17 and probable spontaneous re-oxidation, results in overall deoxygenation to chrysophanol. Baeyer-Villiger oxidation by the Baeyer-Villiger monooxygenase (BVMO) dmxR6 then yields monodictylactone in equilibrium with monodictyphenone. In the case of the cryptosporioptides biosynthesis, monodictylactone is reduced at C-12 to an alcohol (by the short chain dehydrogenases dmxR12 or dmxR8) and hydroxylated at C-5 by dmxR9, yielding the electron-rich aromatic which could eliminate H(2)O to form the ortho-quinonemethide, followed by tautomerisation to paraquinone and complete the formal reduction to produce the 10-methylgroup. Conjugate addition of C-4a-OH to the resulting paraquinone by the monooxygenase dmxR10 then gives cyclohexadienone, which is then reduced at C-5 by the short chain dehydrogenase dmxR3 to give the dihydroxanthone. The 6,7-epoxide in the cryptosporioptides could be introduced by the cytochrome P450 monooxygenase dmxL3. The highly reducing PKS dmxL2 manufactures butyrate, which is further carboxylated by dmxL1 to form ethylmalonate. It is not yet clear whether the carboxylation occurs while the butyrate is attached to the ACP of dmxL2, but this unusual fungal metabolite could then be esterified to O-5 by the O-acetyltransferase dmxR13. Finally, dimerization performed by dmxR5 gives the observed dimers cryptosporioptides A, B and C as the final products of the pathway. The chain is Decarboxylase dmxR15 from Cryptosporiopsis sp. (strain 8999).